A 93-amino-acid chain; its full sequence is Small ribosomal subunit protein uS19 (93 aa).

This sequence belongs to the universal ribosomal protein uS19 family.

Protein S19 forms a complex with S13 that binds strongly to the 16S ribosomal RNA. The chain is Small ribosomal subunit protein uS19 from Clostridium acetobutylicum (strain ATCC 824 / DSM 792 / JCM 1419 / IAM 19013 / LMG 5710 / NBRC 13948 / NRRL B-527 / VKM B-1787 / 2291 / W).